We begin with the raw amino-acid sequence, 828 residues long: Periplasmic nitrate reductase (828 aa).

Residues 1–31 (MKLSRRSFMKANAVAAAAAAAGLSVPGVARA) constitute a signal peptide (tat-type signal). The region spanning 39 to 95 (IKWDKAPCRFCGTGCGVLVGTQQGRVVACQGDPDAPVNRGLNCIKGYFLPKIMYGKD) is the 4Fe-4S Mo/W bis-MGD-type domain. [4Fe-4S] cluster-binding residues include C46, C49, C53, and C81. Mo-bis(molybdopterin guanine dinucleotide)-binding positions include K83, Q150, N175, C179, 212–219 (WGANMAEM), 243–247 (STYQH), 262–264 (QSD), M372, Q376, N482, 508–509 (SD), K531, D558, and 718–727 (TGRVLEHWHT). F794 is a substrate binding site. Mo-bis(molybdopterin guanine dinucleotide) contacts are provided by N802 and K819.

This sequence belongs to the prokaryotic molybdopterin-containing oxidoreductase family. NasA/NapA/NarB subfamily. In terms of assembly, component of the periplasmic nitrate reductase NapAB complex composed of NapA and NapB. The cofactor is [4Fe-4S] cluster. Requires Mo-bis(molybdopterin guanine dinucleotide) as cofactor. In terms of processing, predicted to be exported by the Tat system. The position of the signal peptide cleavage has not been experimentally proven.

It localises to the periplasm. It catalyses the reaction 2 Fe(II)-[cytochrome] + nitrate + 2 H(+) = 2 Fe(III)-[cytochrome] + nitrite + H2O. Its function is as follows. Catalytic subunit of the periplasmic nitrate reductase complex NapAB. Receives electrons from NapB and catalyzes the reduction of nitrate to nitrite. The chain is Periplasmic nitrate reductase from Escherichia coli O157:H7 (strain EC4115 / EHEC).